Here is a 386-residue protein sequence, read N- to C-terminus: Convicilin (386 aa).

A signal peptide spans 1-29; that stretch reads MATTIKSRFPLLLLLGIIFLASVVSVTYA. The tract at residues 33–199 is disordered; it reads EGSEPRVPAQ…EERSSESQER (167 aa). Composition is skewed to basic and acidic residues over residues 41-65, 74-91, 104-144, and 153-186; these read AQRE…PSYE, QRER…RHGE, EKQK…RWER, and EEWR…HQRE. Positions 202–359 constitute a Cupin type-1 domain; the sequence is PFLFKSNKFL…SYNTRYETIE (158 aa). A disordered region spans residues 367-386; the sequence is EKDRKRRQQGEETDAIVKVS.

This sequence belongs to the 7S seed storage protein family.

It is found in the vacuole. The protein resides in the aleurone grain. Functionally, seed storage protein. In Pisum sativum (Garden pea), this protein is Convicilin (CVCB).